The primary structure comprises 241 residues: Ribonuclease PH (241 aa).

Residues arginine 89 and 127 to 129 (GTR) each bind phosphate.

This sequence belongs to the RNase PH family. As to quaternary structure, homohexameric ring arranged as a trimer of dimers.

The catalysed reaction is tRNA(n+1) + phosphate = tRNA(n) + a ribonucleoside 5'-diphosphate. Its function is as follows. Phosphorolytic 3'-5' exoribonuclease that plays an important role in tRNA 3'-end maturation. Removes nucleotide residues following the 3'-CCA terminus of tRNAs; can also add nucleotides to the ends of RNA molecules by using nucleoside diphosphates as substrates, but this may not be physiologically important. Probably plays a role in initiation of 16S rRNA degradation (leading to ribosome degradation) during starvation. The chain is Ribonuclease PH from Xylella fastidiosa (strain M23).